A 330-amino-acid chain; its full sequence is Holliday junction branch migration complex subunit RuvB (330 aa).

A large ATPase domain (RuvB-L) region spans residues 1-181 (MEDRLVGCRL…FGVINKLELY (181 aa)). Residues Leu20, Arg21, Gly62, Lys65, Thr66, Thr67, 128–130 (EDY), Arg171, Tyr181, and Arg218 contribute to the ATP site. Residue Thr66 participates in Mg(2+) binding. The small ATPAse domain (RuvB-S) stretch occupies residues 182-252 (SVEELGQIVK…IARTGLEALE (71 aa)). Positions 255–330 (EIGLDAVDRN…AYEHFGLKYE (76 aa)) are head domain (RuvB-H). Lys310 and Arg315 together coordinate DNA.

It belongs to the RuvB family. As to quaternary structure, homohexamer. Forms an RuvA(8)-RuvB(12)-Holliday junction (HJ) complex. HJ DNA is sandwiched between 2 RuvA tetramers; dsDNA enters through RuvA and exits via RuvB. An RuvB hexamer assembles on each DNA strand where it exits the tetramer. Each RuvB hexamer is contacted by two RuvA subunits (via domain III) on 2 adjacent RuvB subunits; this complex drives branch migration. In the full resolvosome a probable DNA-RuvA(4)-RuvB(12)-RuvC(2) complex forms which resolves the HJ.

It is found in the cytoplasm. The catalysed reaction is ATP + H2O = ADP + phosphate + H(+). Its function is as follows. The RuvA-RuvB-RuvC complex processes Holliday junction (HJ) DNA during genetic recombination and DNA repair, while the RuvA-RuvB complex plays an important role in the rescue of blocked DNA replication forks via replication fork reversal (RFR). RuvA specifically binds to HJ cruciform DNA, conferring on it an open structure. The RuvB hexamer acts as an ATP-dependent pump, pulling dsDNA into and through the RuvAB complex. RuvB forms 2 homohexamers on either side of HJ DNA bound by 1 or 2 RuvA tetramers; 4 subunits per hexamer contact DNA at a time. Coordinated motions by a converter formed by DNA-disengaged RuvB subunits stimulates ATP hydrolysis and nucleotide exchange. Immobilization of the converter enables RuvB to convert the ATP-contained energy into a lever motion, pulling 2 nucleotides of DNA out of the RuvA tetramer per ATP hydrolyzed, thus driving DNA branch migration. The RuvB motors rotate together with the DNA substrate, which together with the progressing nucleotide cycle form the mechanistic basis for DNA recombination by continuous HJ branch migration. Branch migration allows RuvC to scan DNA until it finds its consensus sequence, where it cleaves and resolves cruciform DNA. The chain is Holliday junction branch migration complex subunit RuvB from Acetivibrio thermocellus (strain ATCC 27405 / DSM 1237 / JCM 9322 / NBRC 103400 / NCIMB 10682 / NRRL B-4536 / VPI 7372) (Clostridium thermocellum).